The following is a 429-amino-acid chain: Ribosomal RNA small subunit methyltransferase B (429 aa).

Residues 254 to 260 (CAAPGGK), Asp-277, Asp-303, and Asp-322 contribute to the S-adenosyl-L-methionine site. The active-site Nucleophile is the Cys-375.

This sequence belongs to the class I-like SAM-binding methyltransferase superfamily. RsmB/NOP family.

It localises to the cytoplasm. It catalyses the reaction cytidine(967) in 16S rRNA + S-adenosyl-L-methionine = 5-methylcytidine(967) in 16S rRNA + S-adenosyl-L-homocysteine + H(+). Functionally, specifically methylates the cytosine at position 967 (m5C967) of 16S rRNA. This is Ribosomal RNA small subunit methyltransferase B from Escherichia coli O157:H7.